The chain runs to 251 residues: Small ribosomal subunit protein uS2 (251 aa).

Residue S2 is modified to N-acetylserine. The segment at 213-251 is disordered; it reads QVAEEATAAADEDVKEEVAEEQTEAADWAEGNTEEVASW. Over residues 222 to 236 the composition is skewed to acidic residues; the sequence is ADEDVKEEVAEEQTE.

This sequence belongs to the universal ribosomal protein uS2 family. Component of the small ribosomal subunit. Mature ribosomes consist of a small (40S) and a large (60S) subunit. The 40S subunit contains about 33 different proteins and 1 molecule of RNA (18S). The 60S subunit contains about 49 different proteins and 3 molecules of RNA (25S, 5.8S and 5S). Interacts with RPS21.

The protein resides in the cytoplasm. Required for the assembly and/or stability of the 40S ribosomal subunit. Required for the processing of the 20S rRNA-precursor to mature 18S rRNA in a late step of the maturation of 40S ribosomal subunits. The polypeptide is Small ribosomal subunit protein uS2 (Lachancea thermotolerans (strain ATCC 56472 / CBS 6340 / NRRL Y-8284) (Yeast)).